The chain runs to 483 residues: MQQTPLFKNHYFHQLPEFYTALQPKPLHGARLLYHSEGLAAELGLSSDWFTPEQDAVWSGERLLPGMEPLAQVYSGHQFGMWAGQLGDGRGILLGEQQLADGRSMDWHLKGAGLTPYSRMGDGRAVLRSVIREFLASEAMHHLGIPTTRALTIVTSTHPVQREQEEKGAMLMRVAESHVRFGHFEHFYYRREPEKVRQLVEYVIARHWPQWENDERRYELWFGDVVERTARLITHWQAVGFSHGVMNTDNMSILGLTIDYGPYGFLDAYQPNFICNHSDHRGRYAFDNQPAVGLWNLHRLAQALSGLMDTDTLERALARYEPALMQHYGTLMRAKLGLFTASAEDNDVLVGLLRLMQQEGSDYTHTFRLLADSEKQASRAPLRDEFIDRAAFDSWFATYRQRLMQEEQGDEERRRLMNTTNPKFILRNYLAQMAIERAENDDISVLARLHQALCQPFDEQPDKNDLAALPPEWGKHLEISCSS.

Positions 87, 89, 90, 110, 122, 123, 173, and 180 each coordinate ATP. Asp-249 serves as the catalytic Proton acceptor. Positions 250 and 259 each coordinate Mg(2+). Residue Asp-259 participates in ATP binding.

It belongs to the SELO family. The cofactor is Mg(2+). Requires Mn(2+) as cofactor.

It carries out the reaction L-seryl-[protein] + ATP = 3-O-(5'-adenylyl)-L-seryl-[protein] + diphosphate. The enzyme catalyses L-threonyl-[protein] + ATP = 3-O-(5'-adenylyl)-L-threonyl-[protein] + diphosphate. It catalyses the reaction L-tyrosyl-[protein] + ATP = O-(5'-adenylyl)-L-tyrosyl-[protein] + diphosphate. The catalysed reaction is L-histidyl-[protein] + UTP = N(tele)-(5'-uridylyl)-L-histidyl-[protein] + diphosphate. It carries out the reaction L-seryl-[protein] + UTP = O-(5'-uridylyl)-L-seryl-[protein] + diphosphate. The enzyme catalyses L-tyrosyl-[protein] + UTP = O-(5'-uridylyl)-L-tyrosyl-[protein] + diphosphate. Functionally, nucleotidyltransferase involved in the post-translational modification of proteins. It can catalyze the addition of adenosine monophosphate (AMP) or uridine monophosphate (UMP) to a protein, resulting in modifications known as AMPylation and UMPylation. In Pectobacterium carotovorum subsp. carotovorum (strain PC1), this protein is Protein nucleotidyltransferase YdiU.